The following is a 305-amino-acid chain: UDP-3-O-acyl-N-acetylglucosamine deacetylase (305 aa).

His-79, His-238, and Asp-242 together coordinate Zn(2+). The active-site Proton donor is the His-265.

It belongs to the LpxC family. Requires Zn(2+) as cofactor.

It carries out the reaction a UDP-3-O-[(3R)-3-hydroxyacyl]-N-acetyl-alpha-D-glucosamine + H2O = a UDP-3-O-[(3R)-3-hydroxyacyl]-alpha-D-glucosamine + acetate. It functions in the pathway glycolipid biosynthesis; lipid IV(A) biosynthesis; lipid IV(A) from (3R)-3-hydroxytetradecanoyl-[acyl-carrier-protein] and UDP-N-acetyl-alpha-D-glucosamine: step 2/6. Its function is as follows. Catalyzes the hydrolysis of UDP-3-O-myristoyl-N-acetylglucosamine to form UDP-3-O-myristoylglucosamine and acetate, the committed step in lipid A biosynthesis. In Salmonella paratyphi A (strain ATCC 9150 / SARB42), this protein is UDP-3-O-acyl-N-acetylglucosamine deacetylase.